Here is a 135-residue protein sequence, read N- to C-terminus: Protein Wnt-7b (135 aa).

Disulfide bonds link Cys3/Cys17 and Cys5/Cys12. Ser9 is lipidated: O-palmitoleoyl serine; by PORCN. The segment at 41–69 is disordered linker; the sequence is VEVVRANRLRQPTFLKIKKVRSYQKPMET. 3 cysteine pairs are disulfide-bonded: Cys81–Cys112, Cys97–Cys107, and Cys134–Cys135. Residue Asn98 is glycosylated (N-linked (GlcNAc...) asparagine).

It belongs to the Wnt family. Palmitoleoylation is required for efficient binding to frizzled receptors. Depalmitoleoylation leads to Wnt signaling pathway inhibition. In adults, in brain and lung.

The protein resides in the secreted. The protein localises to the extracellular space. Its subcellular location is the extracellular matrix. Its function is as follows. Ligand for members of the frizzled family of seven transmembrane receptors that functions in the canonical Wnt/beta-catenin signaling pathway. Required for normal fusion of the chorion and the allantois during placenta development. Required for central nervous system (CNS) angiogenesis and blood-brain barrier regulation. This chain is Protein Wnt-7b (wnt7b), found in Xenopus laevis (African clawed frog).